A 455-amino-acid polypeptide reads, in one-letter code: Probable cytosolic iron-sulfur protein assembly protein 1 (455 aa).

WD repeat units lie at residues 31–70 (GHSS…TTSA), 90–129 (GHQR…DGSS), 163–202 (GHES…EFEC), 208–247 (EHSQ…DWFC), 253–292 (GHES…QCEA), 318–365 (YHDR…DEKS), and 380–453 (HASA…YAAT).

The protein belongs to the WD repeat CIA1 family.

Functionally, essential component of the cytosolic iron-sulfur (Fe/S) protein assembly machinery. Required for the maturation of extramitochondrial Fe/S proteins. In Mycosarcoma maydis (Corn smut fungus), this protein is Probable cytosolic iron-sulfur protein assembly protein 1.